We begin with the raw amino-acid sequence, 385 residues long: ATP phosphoribosyltransferase regulatory subunit (385 aa).

It belongs to the class-II aminoacyl-tRNA synthetase family. HisZ subfamily. In terms of assembly, heteromultimer composed of HisG and HisZ subunits.

The protein localises to the cytoplasm. The protein operates within amino-acid biosynthesis; L-histidine biosynthesis; L-histidine from 5-phospho-alpha-D-ribose 1-diphosphate: step 1/9. Functionally, required for the first step of histidine biosynthesis. May allow the feedback regulation of ATP phosphoribosyltransferase activity by histidine. The chain is ATP phosphoribosyltransferase regulatory subunit from Lysinibacillus sphaericus (strain C3-41).